A 210-amino-acid polypeptide reads, in one-letter code: 2-dehydro-3-deoxy-phosphogluconate aldolase (210 aa).

The active-site Proton acceptor is E41. Residues R45, T69, and K129 each coordinate pyruvate. K129 acts as the Schiff-base intermediate with substrate in catalysis.

The protein belongs to the KHG/KDPG aldolase family. In terms of assembly, homotrimer.

It is found in the cytoplasm. The catalysed reaction is 2-dehydro-3-deoxy-6-phospho-D-gluconate = D-glyceraldehyde 3-phosphate + pyruvate. It participates in carbohydrate acid metabolism; 2-dehydro-3-deoxy-D-gluconate degradation; D-glyceraldehyde 3-phosphate and pyruvate from 2-dehydro-3-deoxy-D-gluconate: step 2/2. In terms of biological role, catalyzes the reversible, stereospecific retro-aldol cleavage of 2-keto-3-deoxy-6-phosphogluconate (KDPG) to pyruvate and D-glyceraldehyde-3-phosphate. The chain is 2-dehydro-3-deoxy-phosphogluconate aldolase (eda) from Treponema pallidum (strain Nichols).